The sequence spans 145 residues: Large ribosomal subunit protein bL17 (145 aa).

The segment at 123 to 145 is disordered; it reads KRVDRKKKDPAKDKTEEKKLATA.

Belongs to the bacterial ribosomal protein bL17 family. Part of the 50S ribosomal subunit. Contacts protein L32.

This Pelagibacter ubique (strain HTCC1062) protein is Large ribosomal subunit protein bL17.